A 551-amino-acid polypeptide reads, in one-letter code: Electron transfer flavoprotein-ubiquinone oxidoreductase (551 aa).

10–24 (VVIVGAGPAGLSAAC) serves as a coordination point for FAD. Residues Cys496, Cys520, Cys523, and Cys526 each contribute to the [4Fe-4S] cluster site. Residues 511 to 540 (KRFQINAQNCVHCKTCDIKDPAQNITWVAP) enclose the 4Fe-4S ferredoxin-type domain.

This sequence belongs to the ETF-QO/FixC family. [4Fe-4S] cluster is required as a cofactor. It depends on FAD as a cofactor.

It carries out the reaction a ubiquinone + reduced [electron-transfer flavoprotein] = a ubiquinol + oxidized [electron-transfer flavoprotein] + H(+). Accepts electrons from ETF and reduces ubiquinone. The chain is Electron transfer flavoprotein-ubiquinone oxidoreductase from Pseudomonas aeruginosa (strain ATCC 15692 / DSM 22644 / CIP 104116 / JCM 14847 / LMG 12228 / 1C / PRS 101 / PAO1).